Here is a 269-residue protein sequence, read N- to C-terminus: Tryptophan synthase alpha chain (269 aa).

Residues Glu-50 and Asp-61 each act as proton acceptor in the active site.

Belongs to the TrpA family. Tetramer of two alpha and two beta chains.

It carries out the reaction (1S,2R)-1-C-(indol-3-yl)glycerol 3-phosphate + L-serine = D-glyceraldehyde 3-phosphate + L-tryptophan + H2O. It participates in amino-acid biosynthesis; L-tryptophan biosynthesis; L-tryptophan from chorismate: step 5/5. Its function is as follows. The alpha subunit is responsible for the aldol cleavage of indoleglycerol phosphate to indole and glyceraldehyde 3-phosphate. This is Tryptophan synthase alpha chain from Francisella tularensis subsp. holarctica (strain FTNF002-00 / FTA).